Consider the following 478-residue polypeptide: Cytochrome c-552 (478 aa).

An N-terminal signal peptide occupies residues 1–26; it reads MTRIKINARRIFSLLIPFFFFTSVHA. His94 contributes to the heme c binding site. Heme-binding residues include Cys122, Cys125, and Lys126. Heme c is bound by residues Cys160, Cys163, His164, Cys209, Cys212, and His213. Positions 215, 216, 261, and 263 each coordinate Ca(2+). Tyr216 contacts substrate. His264 contacts substrate. His275, Cys282, Cys285, His286, His301, Cys314, Cys317, His318, and His393 together coordinate heme c.

This sequence belongs to the cytochrome c-552 family. Ca(2+) serves as cofactor. Heme c is required as a cofactor.

It is found in the periplasm. The enzyme catalyses 6 Fe(III)-[cytochrome c] + NH4(+) + 2 H2O = 6 Fe(II)-[cytochrome c] + nitrite + 8 H(+). The protein operates within nitrogen metabolism; nitrate reduction (assimilation). Functionally, catalyzes the reduction of nitrite to ammonia, consuming six electrons in the process. This chain is Cytochrome c-552, found in Escherichia coli O6:H1 (strain CFT073 / ATCC 700928 / UPEC).